The chain runs to 267 residues: Membrane-associated protein Vipp1 (267 aa).

A coiled-coil region spans residues 26-156 (EKVLEQAVID…KANAELQQTL (131 aa)). The tract at residues 224–252 (GTSAATPQLEAAPVDSSVPANNASQDDAV) is disordered.

This sequence belongs to the PspA/Vipp/IM30 family.

It is found in the cell inner membrane. Required for thylakoid formation. This is Membrane-associated protein Vipp1 from Synechocystis sp. (strain ATCC 27184 / PCC 6803 / Kazusa).